Here is a 430-residue protein sequence, read N- to C-terminus: Tektin-2 (430 aa).

2 coiled-coil regions span residues 75 to 162 and 226 to 380; these read KEML…FQHL and KNRA…IACK.

It belongs to the tektin family. In terms of assembly, microtubule inner protein component of sperm flagellar doublet microtubules. May interact with CCDC172. Post-translationally, tyrosine phosphorylated. In terms of processing, ubiquitinated, leading to its degradation. Deubiquitinated by USP16, promoting its stability.

It is found in the cytoplasm. The protein localises to the cytoskeleton. It localises to the cilium axoneme. The protein resides in the flagellum axoneme. Its subcellular location is the microtubule organizing center. In terms of biological role, microtubule inner protein (MIP) part of the dynein-decorated doublet microtubules (DMTs) in cilia and flagellar axoneme. Plays a key role in the assembly or attachment of the inner dynein arm to microtubules in sperm flagella and tracheal cilia. Forms filamentous polymers in the walls of ciliary and flagellar microtubules. The chain is Tektin-2 (Tekt2) from Rattus norvegicus (Rat).